Reading from the N-terminus, the 226-residue chain is MKIRCLHDWNVSLEEAADIQRTLKGMLSFEFPAKKVSIVAGVDVSFPQKNLGLCVIVVMDDTLKVIESVYHTQEVHIPYVSGFLSFREGPIFIETVKKLKIVPDLFFFDGQGIAHPRGLGIAAHMGLLLEKPSLGVAKSHLFGSYNEPGRNKGDFSYMYNKTGEIIGTVLRTKKNTKPVFVSPGHMMDVDTAMSLTLKYTGKYRLPEPTRQAHILTQRLRKNHLLR.

Positions 43 and 109 each coordinate Mg(2+).

The protein belongs to the endonuclease V family. It depends on Mg(2+) as a cofactor.

The protein localises to the cytoplasm. The enzyme catalyses Endonucleolytic cleavage at apurinic or apyrimidinic sites to products with a 5'-phosphate.. In terms of biological role, DNA repair enzyme involved in the repair of deaminated bases. Selectively cleaves double-stranded DNA at the second phosphodiester bond 3' to a deoxyinosine leaving behind the intact lesion on the nicked DNA. The chain is Endonuclease V from Kosmotoga olearia (strain ATCC BAA-1733 / DSM 21960 / TBF 19.5.1).